The following is a 267-amino-acid chain: Probable ribose-5-phosphate isomerase 1 (267 aa).

At glycine 2 the chain carries N-acetylglycine. A Phosphoserine modification is found at serine 92.

This sequence belongs to the ribose 5-phosphate isomerase family. As to expression, expressed in roots, cotyledons, leaves and flowers.

It localises to the cytoplasm. The enzyme catalyses aldehydo-D-ribose 5-phosphate = D-ribulose 5-phosphate. Its pathway is carbohydrate degradation; pentose phosphate pathway; D-ribose 5-phosphate from D-ribulose 5-phosphate (non-oxidative stage): step 1/1. In terms of biological role, catalyzes the reversible conversion of ribose-5-phosphate to ribulose 5-phosphate. This Arabidopsis thaliana (Mouse-ear cress) protein is Probable ribose-5-phosphate isomerase 1 (RPI1).